Reading from the N-terminus, the 604-residue chain is MLARALLLCAVLALSHTANPCCSHPCQNRGVCMSVGFDQYKCDCTRTGFYGENCSTPEFLTRIKLFLKPTPNTVHYILTHFKGFWNVVNNIPFLRNAIMSYVLTSRSHLIDSPPTYNADYGYKSWEAFSNLSYYTRALPPVPDDCPTPLGVKGKKQLPDSNEIVEKLLLRRKFIPDPQGSNMMFAFFAQHFTHQFFKTDHKRGPAFTNGLGHGVDLNHIYGETLARQRKLRLFKDGKMKYQIIDGEMYPPTVKDTQAEMIYPPQVPEHLRFAVGQEVFGLVPGLMMYATIWLREHNRVCDVLKQEHPEWGDEQLFQTSRLILIGETIKIVIEDYVQHLSGYHFKLKFDPELLFNKQFQYQNRIAAEFNTLYHWHPLLPDTFQIHDQKYNYQQFIYNNSILLEHGITQFVESFTRQIAGRVAGGRNVPPAVQKVSQASIDQSRQMKYQSFNEYRKRFMLKPYESFEELTGEKEMSAELEALYGDIDAVELYPALLVEKPRPDAIFGETMVEVGAPFSLKGLMGNVICSPAYWKPSTFGGEVGFQIINTASIQSLICNNVKGCPFTSFSVPDPELIKTVTINASSSRSGLDDINPTVLLKERSTEL.

The signal sequence occupies residues 1-17 (MLARALLLCAVLALSHT). Positions 18-55 (ANPCCSHPCQNRGVCMSVGFDQYKCDCTRTGFYGENCS) constitute an EGF-like domain. Cystine bridges form between cysteine 21/cysteine 32, cysteine 22/cysteine 145, cysteine 26/cysteine 42, and cysteine 44/cysteine 54. Asparagine 53 carries N-linked (GlcNAc...) asparagine glycosylation. Position 106 (arginine 106) interacts with substrate. Asparagine 130 carries an N-linked (GlcNAc...) asparagine glycan. The Proton acceptor role is filled by histidine 193. Tyrosine 341 provides a ligand contact to substrate. Tyrosine 371 (for cyclooxygenase activity) is an active-site residue. Histidine 374 lines the heme b pocket. Residue asparagine 396 is glycosylated (N-linked (GlcNAc...) asparagine). Cysteine 526 carries the S-nitrosocysteine modification. Cysteine 555 and cysteine 561 are oxidised to a cystine. Serine 565 bears the O-acetylserine mark. Asparagine 580 is a glycosylation site (N-linked (GlcNAc...) asparagine).

The protein belongs to the prostaglandin G/H synthase family. In terms of assembly, homodimer. Heme b serves as cofactor. In terms of processing, S-nitrosylation by NOS2 (iNOS) activates enzyme activity. S-nitrosylation may take place on different Cys residues in addition to Cys-526. Acetylated at Ser-565 by SPHK1. During neuroinflammation, acetylation by SPHK1 promotes neuronal secretion of specialized preresolving mediators (SPMs), especially 15-R-lipoxin A4, which results in an increase of phagocytic microglia.

It localises to the microsome membrane. The protein resides in the endoplasmic reticulum membrane. It is found in the nucleus inner membrane. The protein localises to the nucleus outer membrane. The catalysed reaction is (5Z,8Z,11Z,14Z)-eicosatetraenoate + AH2 + 2 O2 = prostaglandin H2 + A + H2O. It catalyses the reaction (5Z,8Z,11Z,14Z)-eicosatetraenoate + 2 O2 = prostaglandin G2. The enzyme catalyses prostaglandin G2 + AH2 = prostaglandin H2 + A + H2O. It carries out the reaction (5Z,8Z,11Z,14Z,17Z)-eicosapentaenoate + 2 O2 = prostaglandin G3. The catalysed reaction is prostaglandin G3 + AH2 = prostaglandin H3 + A + H2O. It catalyses the reaction (8Z,11Z,14Z)-eicosatrienoate + 2 O2 = prostaglandin G1. The enzyme catalyses prostaglandin G1 + AH2 = prostaglandin H1 + A + H2O. It carries out the reaction 2-(5Z,8Z,11Z,14Z)-eicosatetraenoyl-sn-glycero-3-phosphoethanolamine + 2 O2 = 2-(prostaglandin G2)-sn-glycero-3-phosphoethanolamine. The catalysed reaction is 2-(prostaglandin G2)-sn-glycero-3-phosphoethanolamine + AH2 = 2-(prostaglandin H2)-sn-glycero-3-phosphoethanolamine + A + H2O. It catalyses the reaction 2-(5Z,8Z,11Z,14Z)-eicosatetraenoyl-sn-glycero-3-phosphocholine + 2 O2 = 2-(prostaglandin G2)-sn-glycero-3-phosphocholine. The enzyme catalyses 2-(prostaglandin G2)-sn-glycero-3-phosphocholine + AH2 = 2-(prostaglandin H2)-sn-glycero-3-phosphocholine + A + H2O. It carries out the reaction (15S)-hydroperoxy-(5Z,8Z,11Z,13E)-eicosatetraenoate + AH2 = (15S)-hydroxy-(5Z,8Z,11Z,13E)-eicosatetraenoate + A + H2O. The catalysed reaction is 2-(5Z,8Z,11Z,14Z)-eicosatetraenoyl-sn-glycero-3-phosphocholine + AH2 + O2 = 2-[(15S)-hydroxy-(5Z,8Z,11Z,13E)-eicosatetraenoyl]-sn-glycero-3-phosphocholine + A + H2O. It catalyses the reaction 2-(5Z,8Z,11Z,14Z)-eicosatetraenoyl-sn-glycero-3-phosphocholine + AH2 + O2 = 2-[(15R)-hydroxy-(5Z,8Z,11Z,13E)-eicosatetraenoyl]-sn-glycero-3-phosphocholine + A + H2O. The enzyme catalyses 2-(5Z,8Z,11Z,14Z)-eicosatetraenoyl-sn-glycero-3-phosphocholine + AH2 + O2 = 2-[(11R)-hydroxy-(5Z,8Z,12E,14Z)-eicosatetraenoyl]-sn-glycero-3-phosphocholine + A + H2O. It carries out the reaction (9Z,12Z)-octadecadienoate + AH2 + O2 = 9-hydroxy-(10E,12Z)-octadecadienoate + A + H2O. The catalysed reaction is (9Z,12Z)-octadecadienoate + AH2 + O2 = 13-hydroxy-(9Z,11E)-octadecadienoate + A + H2O. It catalyses the reaction (5Z,8Z,11Z,14Z)-eicosatetraenoate + AH2 + O2 = (15R)-hydroxy-(5Z,8Z,11Z,13E)-eicosatetraenoate + A + H2O. The enzyme catalyses (5Z,8Z,11Z,14Z)-eicosatetraenoate + AH2 + O2 = (11R)-hydroxy-(5Z,8Z,12E,14Z)-eicosatetraenoate + A + H2O. It carries out the reaction (5Z,8Z,11Z,14Z,17Z)-eicosapentaenoate + AH2 + O2 = (11R)-hydroxy-(5Z,8Z,12E,14Z,17Z)-eicosapentaenoate + A + H2O. The catalysed reaction is (5Z,8Z,11Z,14Z,17Z)-eicosapentaenoate + AH2 + O2 = (18S)-hydroxy-(5Z,8Z,11Z,14Z,16E)-eicosapentaenoate + A + H2O. It catalyses the reaction (5Z,8Z,11Z,14Z,17Z)-eicosapentaenoate + AH2 + O2 = (18R)-hydroxy-(5Z,8Z,11Z,14Z,16E)-eicosapentaenoate + A + H2O. The enzyme catalyses (5Z,8Z,11Z,14Z,17Z)-eicosapentaenoate + AH2 + O2 = (15R)-hydroxy-(5Z,8Z,11Z,13E,17Z)-eicosapentaenoate + A + H2O. It carries out the reaction (5Z,8Z,11Z,14Z,17Z)-eicosapentaenoate + AH2 + O2 = (15S)-hydroxy-(5Z,8Z,11Z,13E,17Z)-eicosapentaenoate + A + H2O. The catalysed reaction is (7Z,10Z,13Z,16Z,19Z)-docosapentaenoate + AH2 + O2 = 13R-hydroxy-(7Z,10Z,14E,16Z,19Z)-docosapentaenoate + A + H2O. It catalyses the reaction (4Z,7Z,10Z,13Z,16Z,19Z)-docosahexaenoate + AH2 + O2 = 13-hydroxy-(4Z,7Z,10Z,14E,16Z,19Z)-docosahexaenoate + A + H2O. The enzyme catalyses (5S)-hydroxy-(6E,8Z,11Z,14Z)-eicosatetraenoate + AH2 + O2 = (5S,15R)-dihydroxy-(6E,8Z,11Z,13E)-eicosatetraenoate + A + H2O. It carries out the reaction (4Z,7Z,10Z,13Z,16Z,19Z)-docosahexaenoate + AH2 + O2 = 17R-hydroxy-(4Z,7Z,10Z,13Z,15E,19Z)-docosahexaenoate + A + H2O. The catalysed reaction is (5S)-hydroxy-(6E,8Z,11Z,14Z)-eicosatetraenoate + AH2 + O2 = (5S,15S)-dihydroxy-(6E,8Z,11Z,13E)-eicosatetraenoate + A + H2O. It catalyses the reaction (5S)-hydroxy-(6E,8Z,11Z,14Z)-eicosatetraenoate + AH2 + O2 = (5S,11R)-dihydroxy-(6E,8Z,12E,14Z)-eicosatetraenoate + A + H2O. The enzyme catalyses 2-(5Z,8Z,11Z,14Z-eicosatetraenoyl)-glycerol + 2 O2 = 2-glyceryl-prostaglandin G2. It carries out the reaction 2-glyceryl-prostaglandin G2 + AH2 = 2-glyceryl-prostaglandin H2 + A + H2O. The catalysed reaction is (5Z,8Z,11Z,14Z)-eicosatetraenoate + O2 = (15R)-hydroperoxy-(5Z,8Z,11Z,13E)-eicosatetraenoate. It catalyses the reaction (5Z,8Z,11Z,14Z)-eicosatetraenoate + O2 = 11R-hydroperoxy-(5Z,8Z,12E,14Z)-eicosatetraenoate. The enzyme catalyses (9Z,12Z)-octadecadienoate + AH2 + O2 = (9R)-hydroxy-(10E,12Z)-octadecadienoate + A + H2O. It carries out the reaction (9Z,12Z)-octadecadienoate + AH2 + O2 = (9S)-hydroxy-(10E,12Z)-octadecadienoate + A + H2O. The catalysed reaction is (9Z,12Z)-octadecadienoate + AH2 + O2 = (13S)-hydroxy-(9Z,11E)-octadecadienoate + A + H2O. It catalyses the reaction (9Z,12Z)-octadecadienoate + AH2 + O2 = (13R)-hydroxy-(9Z,11E)-octadecadienoate + A + H2O. It participates in lipid metabolism; prostaglandin biosynthesis. Its activity is regulated as follows. The cyclooxygenase activity is inhibited by nonsteroidal anti-inflammatory drugs (NSAIDs) including aspirin, ibuprofen, flurbiprofen, celecoxib, flufenamic, mefenamic and tolfenamic acids as well as by hydroperoxide scavenger erythrocyte glutathione peroxidase GPX1. Aspirin triggers enzyme acetylation turning off its ability to generate pro-inflammatory prostaglandins, but switches on its capacity to produce anti-inflammatory lipid mediators involved in inflammation resolution. Aspirin enhances lipoxygenase-type activity toward production of epimers with R stereochemistry such as 15R-HETE, 18R-HEPE, 15R-HEPE and 17R-HDHA. Atorvastatin, a cholesterol-lowering drug, triggers enzyme S-nitrosylation increasing production of 13-series resolvins (RvTs). In terms of biological role, dual cyclooxygenase and peroxidase in the biosynthesis pathway of prostanoids, a class of C20 oxylipins mainly derived from arachidonate ((5Z,8Z,11Z,14Z)-eicosatetraenoate, AA, C20:4(n-6)), with a particular role in the inflammatory response. The cyclooxygenase activity oxygenates AA to the hydroperoxy endoperoxide prostaglandin G2 (PGG2), and the peroxidase activity reduces PGG2 to the hydroxy endoperoxide prostaglandin H2 (PGH2), the precursor of all 2-series prostaglandins and thromboxanes. This complex transformation is initiated by abstraction of hydrogen at carbon 13 (with S-stereochemistry), followed by insertion of molecular O2 to form the endoperoxide bridge between carbon 9 and 11 that defines prostaglandins. The insertion of a second molecule of O2 (bis-oxygenase activity) yields a hydroperoxy group in PGG2 that is then reduced to PGH2 by two electrons. Similarly catalyzes successive cyclooxygenation and peroxidation of dihomo-gamma-linoleate (DGLA, C20:3(n-6)) and eicosapentaenoate (EPA, C20:5(n-3)) to corresponding PGH1 and PGH3, the precursors of 1- and 3-series prostaglandins. In an alternative pathway of prostanoid biosynthesis, converts 2-arachidonoyl lysophopholipids to prostanoid lysophopholipids, which are then hydrolyzed by intracellular phospholipases to release free prostanoids. Metabolizes 2-arachidonoyl glycerol yielding the glyceryl ester of PGH2, a process that can contribute to pain response. Generates lipid mediators from n-3 and n-6 polyunsaturated fatty acids (PUFAs) via a lipoxygenase-type mechanism. Oxygenates PUFAs to hydroperoxy compounds and then reduces them to corresponding alcohols. Plays a role in the generation of resolution phase interaction products (resolvins) during both sterile and infectious inflammation. Metabolizes docosahexaenoate (DHA, C22:6(n-3)) to 17R-HDHA, a precursor of the D-series resolvins (RvDs). As a component of the biosynthetic pathway of E-series resolvins (RvEs), converts eicosapentaenoate (EPA, C20:5(n-3)) primarily to 18S-HEPE that is further metabolized by ALOX5 and LTA4H to generate 18S-RvE1 and 18S-RvE2. In vascular endothelial cells, converts docosapentaenoate (DPA, C22:5(n-3)) to 13R-HDPA, a precursor for 13-series resolvins (RvTs) shown to activate macrophage phagocytosis during bacterial infection. In activated leukocytes, contributes to oxygenation of hydroxyeicosatetraenoates (HETE) to diHETES (5,15-diHETE and 5,11-diHETE). Can also use linoleate (LA, (9Z,12Z)-octadecadienoate, C18:2(n-6)) as substrate and produce hydroxyoctadecadienoates (HODEs) in a regio- and stereospecific manner, being (9R)-HODE ((9R)-hydroxy-(10E,12Z)-octadecadienoate) and (13S)-HODE ((13S)-hydroxy-(9Z,11E)-octadecadienoate) its major products. During neuroinflammation, plays a role in neuronal secretion of specialized preresolving mediators (SPMs) 15R-lipoxin A4 that regulates phagocytic microglia. The protein is Prostaglandin G/H synthase 2 of Homo sapiens (Human).